The chain runs to 516 residues: Methionine--tRNA ligase (516 aa).

The 'HIGH' region signature appears at 13–23 (FYPNGKPHIGH). Residues 299–303 (KMSKS) carry the 'KMSKS' region motif. Lys302 lines the ATP pocket.

It belongs to the class-I aminoacyl-tRNA synthetase family. MetG type 2B subfamily. In terms of assembly, monomer.

The protein resides in the cytoplasm. It catalyses the reaction tRNA(Met) + L-methionine + ATP = L-methionyl-tRNA(Met) + AMP + diphosphate. In terms of biological role, is required not only for elongation of protein synthesis but also for the initiation of all mRNA translation through initiator tRNA(fMet) aminoacylation. In Mesorhizobium japonicum (strain LMG 29417 / CECT 9101 / MAFF 303099) (Mesorhizobium loti (strain MAFF 303099)), this protein is Methionine--tRNA ligase.